The following is a 154-amino-acid chain: Lipoprotein signal peptidase (154 aa).

2 helical membrane passes run Gly55 to Met75 and Leu84 to Val104. Residues Asp111 and Asp129 contribute to the active site. The chain crosses the membrane as a helical span at residues Ile124 to Phe144.

Belongs to the peptidase A8 family.

It localises to the cell membrane. The enzyme catalyses Release of signal peptides from bacterial membrane prolipoproteins. Hydrolyzes -Xaa-Yaa-Zaa-|-(S,diacylglyceryl)Cys-, in which Xaa is hydrophobic (preferably Leu), and Yaa (Ala or Ser) and Zaa (Gly or Ala) have small, neutral side chains.. It participates in protein modification; lipoprotein biosynthesis (signal peptide cleavage). Its function is as follows. This protein specifically catalyzes the removal of signal peptides from prolipoproteins. In Listeria monocytogenes serovar 1/2a (strain ATCC BAA-679 / EGD-e), this protein is Lipoprotein signal peptidase.